A 648-amino-acid chain; its full sequence is cAMP-dependent protein kinase catalytic subunit (648 aa).

4 stretches are compositionally biased toward low complexity: residues 1 to 20 (MSNS…TINN), 46 to 67 (SGNN…NSSG), 136 to 175 (QQQP…PQQQ), and 232 to 254 (NTPS…NPHT). Disordered stretches follow at residues 1-25 (MSNS…KVNV), 40-86 (GGGG…TKMD), 121-175 (KVPS…PQQQ), and 219-290 (QQQQ…DTNP). Over residues 255-290 (SGLSLQHAHSSYTPSNVLHSPTHFQSSLPTRLDTNP) the composition is skewed to polar residues. Residues 336-590 (FKQIRVIGTG…ALDVKNHRWF (255 aa)) enclose the Protein kinase domain. ATP is bound by residues 342-350 (IGTGTFGKV) and Lys365. Asp459 acts as the Proton acceptor in catalysis. The residue at position 490 (Thr490) is a Phosphothreonine. Positions 591-648 (SDINWERLYQRRDNGPFIPKIQHQGDSSNFEMYDEEEMVEEPPSSNYVDPYAHLFKDF) constitute an AGC-kinase C-terminal domain.

Belongs to the protein kinase superfamily. AGC Ser/Thr protein kinase family. cAMP subfamily. As to quaternary structure, in Dictyostelium the holoenzyme is a dimer composed of a regulatory (R) and a catalytic (C) subunit. In the presence of cAMP it dissociates into the active C subunit and an R monomer.

The catalysed reaction is L-seryl-[protein] + ATP = O-phospho-L-seryl-[protein] + ADP + H(+). It carries out the reaction L-threonyl-[protein] + ATP = O-phospho-L-threonyl-[protein] + ADP + H(+). Functionally, essential for differentiation and fruit morphogenesis. The protein is cAMP-dependent protein kinase catalytic subunit (pkaC) of Dictyostelium discoideum (Social amoeba).